We begin with the raw amino-acid sequence, 474 residues long: tRNA-2-methylthio-N(6)-dimethylallyladenosine synthase (474 aa).

The MTTase N-terminal domain maps to 3–120 (QKLHIKTWGC…LPEMINQIRG (118 aa)). [4Fe-4S] cluster-binding residues include cysteine 12, cysteine 49, cysteine 83, cysteine 157, cysteine 161, and cysteine 164. The Radical SAM core domain maps to 143-375 (RAEGPTAFVS…QERINQQAAQ (233 aa)). The region spanning 378-441 (RRMLGTEQRV…TNSLRGEVVR (64 aa)) is the TRAM domain.

It belongs to the methylthiotransferase family. MiaB subfamily. As to quaternary structure, monomer. Requires [4Fe-4S] cluster as cofactor.

It localises to the cytoplasm. It carries out the reaction N(6)-dimethylallyladenosine(37) in tRNA + (sulfur carrier)-SH + AH2 + 2 S-adenosyl-L-methionine = 2-methylsulfanyl-N(6)-dimethylallyladenosine(37) in tRNA + (sulfur carrier)-H + 5'-deoxyadenosine + L-methionine + A + S-adenosyl-L-homocysteine + 2 H(+). Functionally, catalyzes the methylthiolation of N6-(dimethylallyl)adenosine (i(6)A), leading to the formation of 2-methylthio-N6-(dimethylallyl)adenosine (ms(2)i(6)A) at position 37 in tRNAs that read codons beginning with uridine. The chain is tRNA-2-methylthio-N(6)-dimethylallyladenosine synthase from Haemophilus influenzae (strain PittGG).